Reading from the N-terminus, the 192-residue chain is Small ribosomal subunit protein eS7 (192 aa).

The protein belongs to the eukaryotic ribosomal protein eS7 family.

This is Small ribosomal subunit protein eS7 (RPS7) from Secale cereale (Rye).